Reading from the N-terminus, the 764-residue chain is Subtilisin-like protease SBT3.1 (764 aa).

An N-terminal signal peptide occupies residues 1 to 32; it reads MIQTLKTDSSFRLCFAAIAFGFVFIMNGKLSS. The propeptide at 33–120 is activation peptide; sequence GTTPHEFPVY…LLENRKLGLQ (88 aa). The Inhibitor I9 domain maps to 41 to 116; the sequence is VYIFYLGERK…EVIILLENRK (76 aa). An N-linked (GlcNAc...) asparagine glycan is attached at asparagine 76. Residues 124-610 enclose the Peptidase S8 domain; the sequence is TWDYLGQFST…GGLVNLEKAT (487 aa). The active-site Charge relay system is the aspartate 156. An N-linked (GlcNAc...) asparagine glycan is attached at asparagine 216. The Charge relay system role is filled by histidine 230. N-linked (GlcNAc...) asparagine glycosylation is found at asparagine 245 and asparagine 374. Serine 541 functions as the Charge relay system in the catalytic mechanism. Asparagine 674, asparagine 711, and asparagine 747 each carry an N-linked (GlcNAc...) asparagine glycan.

Belongs to the peptidase S8 family.

Its subcellular location is the secreted. The chain is Subtilisin-like protease SBT3.1 from Arabidopsis thaliana (Mouse-ear cress).